A 629-amino-acid chain; its full sequence is MDFDSVLSIASQNQGLSSLPKRYSLKTGPPKKDLKVGGVNSAAVQAFLKKKAVEQKNKEQQDKKAKEDLLAKRVELKSDRKARAMASRTKDNFRGYNGIPVIDQPKKRQSKGSSTEEQQSSTKYEGGDYDDEDNFDYEGTDSESEPSRPVKPQAISRPEYSNRVENKPKKLSAPARPASSSMNFADLLKLAEKKQFEPVELKVVKKTEERLRTAEEIRELEMERRVKKLDKGKDVRSDKNSGQKDSRSQTSSNPQKKHVDRDGKNGRFPRPSEEKHQSSSTSKKPKLQASSERTPTSAKLHGDRSNSGSSGALNSKSAMKNGASFQAKQAPPRPSQGQRPATPSDLTPRKGNVSLTQAKSSISGSCPPGAARPGQGPHKNSAHGRPSNFSTSGPSQKPANPGKLSRPGSNAPPRPGGSGVVRPFTGDPSKQPRPGGNLQSQQFPGSSRASLNGPKRMERGVSGSQINRMSSGPGRSQCTVVSETISTKNITPRPGMVQRPPGPQGPRTVIGPSGHRILVKPSGPALPPITSSYKRKFEDEEEYDSEMDDFIDDEGEDQDEISKHIREIFGYDKNKYKDESDYALKFMESSWKEQQKEEARSLRMAVLEDEEEERRELEEMQRKNAKKRK.

The interval 1-522 (MDFDSVLSIA…SGHRILVKPS (522 aa)) is important for interaction with DNA. Residues 45–72 (QAFLKKKAVEQKNKEQQDKKAKEDLLAK) adopt a coiled-coil conformation. Over residues 53–93 (VEQKNKEQQDKKAKEDLLAKRVELKSDRKARAMASRTKDNF) the composition is skewed to basic and acidic residues. Disordered regions lie at residues 53 to 181 (VEQK…ASSS), 206 to 533 (KTEE…TSSY), and 608 to 629 (EDEEEERRELEEMQRKNAKKRK). The span at 111 to 123 (KGSSTEEQQSSTK) shows a compositional bias: polar residues. A compositionally biased stretch (acidic residues) spans 127–144 (GDYDDEDNFDYEGTDSES). A coiled-coil region spans residues 203–228 (VVKKTEERLRTAEEIRELEMERRVKK). Composition is skewed to basic and acidic residues over residues 206 to 247 (KTEE…KDSR) and 257 to 277 (KHVDRDGKNGRFPRPSEEKHQ). 7 stretches are compositionally biased toward polar residues: residues 278–297 (SSSTSKKPKLQASSERTPTS), 305–327 (SNSGSSGALNSKSAMKNGASFQA), 335–345 (SQGQRPATPSD), 353–364 (VSLTQAKSSISG), 387–398 (SNFSTSGPSQKP), 437–450 (NLQSQQFPGSSRAS), and 462–490 (SGSQINRMSSGPGRSQCTVVSETISTKNI). Residues 523–629 (GPALPPITSS…MQRKNAKKRK (107 aa)) form an important for interaction with histones region. Residues 591-629 (WKEQQKEEARSLRMAVLEDEEEERRELEEMQRKNAKKRK) adopt a coiled-coil conformation.

It belongs to the SPT2 family. In terms of assembly, interacts with histones. Interacts with a heterotetrameric complex formed by histone H3 and H4, especially when the histone tetramer is not bound to DNA.

Its subcellular location is the nucleus. The protein localises to the nucleolus. Its function is as follows. Histone chaperone that stabilizes pre-existing histone tetramers and regulates replication-independent histone exchange on chromatin. Required for normal chromatin refolding in the coding region of transcribed genes, and for the suppression of spurious transcription. Binds DNA and histones and promotes nucleosome assembly (in vitro). Facilitates formation of tetrameric histone complexes containing histone H3 and H4. Modulates RNA polymerase 1-mediated transcription. Binds DNA, with a preference for branched DNA species, such as Y-form DNA and Holliday junction DNA. This is Protein SPT2 homolog (spty2d1) from Danio rerio (Zebrafish).